The chain runs to 95 residues: Protein YY1 (95 aa).

An N-terminal signal peptide occupies residues 1-26 (MAVTRTALLVVLVAGAMTMTMRGAEA). Disulfide bonds link Cys-31-Cys-72, Cys-41-Cys-61, Cys-62-Cys-87, and Cys-74-Cys-94.

It belongs to the A9/FIL1 family. As to expression, anther.

It is found in the secreted. In Oryza sativa subsp. japonica (Rice), this protein is Protein YY1.